Reading from the N-terminus, the 179-residue chain is Transcriptional repressor NrdR (179 aa).

Residues 3-34 (CPYCQHTNSRVLESRSSEGGQSIRRRRECLCC) fold into a zinc finger. Residues 49 to 139 (ITVIKHDGKK…VYGRFQGIKD (91 aa)) enclose the ATP-cone domain. The interval 160-179 (KPANDDFSEQETPSTVMMPS) is disordered. Positions 169–179 (QETPSTVMMPS) are enriched in polar residues.

This sequence belongs to the NrdR family. Zn(2+) serves as cofactor.

Negatively regulates transcription of bacterial ribonucleotide reductase nrd genes and operons by binding to NrdR-boxes. In Rippkaea orientalis (strain PCC 8801 / RF-1) (Cyanothece sp. (strain PCC 8801)), this protein is Transcriptional repressor NrdR.